Reading from the N-terminus, the 493-residue chain is Hexokinase (493 aa).

The Hexokinase domain maps to 27-481; sequence EELSWRINKF…SGKGAAITAA (455 aa). Positions 91-239 are hexokinase small subdomain; the sequence is TGQEKGTYYA…AIPAKVCCVL (149 aa). 102–107 is a binding site for ATP; it reads DFGGTN. The interval 177–203 is glucose-binding; the sequence is SVGFTFSFPCTSPSINCSILIDWTKGF. The interval 240 to 470 is hexokinase large subdomain; sequence NDAVGTLMSC…ENLIIIPADD (231 aa).

This sequence belongs to the hexokinase family.

It carries out the reaction a D-hexose + ATP = a D-hexose 6-phosphate + ADP + H(+). It catalyses the reaction D-mannose + ATP = D-mannose 6-phosphate + ADP + H(+). The catalysed reaction is D-fructose + ATP = D-fructose 6-phosphate + ADP + H(+). The enzyme catalyses D-glucose + ATP = D-glucose 6-phosphate + ADP + H(+). It participates in carbohydrate metabolism; hexose metabolism. It functions in the pathway carbohydrate degradation; glycolysis; D-glyceraldehyde 3-phosphate and glycerone phosphate from D-glucose: step 1/4. In terms of biological role, catalyzes the phosphorylation of various hexoses to hexose 6-phosphate. The sequence is that of Hexokinase (HK) from Plasmodium falciparum.